The following is a 214-amino-acid chain: MSNPRIEELPDNEEPTKQQVTAEDEGSDSSDSEGEGEVESGIPAGAGAVVHSRNEKKARKSIAKLGLTRVPGITRVTLRRPKNILFVINNPEVYKSPTSNTYIVFGEAKIEDLNSQAQASAAAQLAAQESHDHAGHDHSGHDHSHDHGKGKAVDTGDEKKEEEEDDTEEVDATGLEDKDIELVMTQASVSRNKAVKALKENDNDIVNSIMALSI.

Disordered stretches follow at residues 1 to 57 (MSNP…NEKK) and 119 to 179 (ASAA…EDKD). Positions 22–38 (AEDEGSDSSDSEGEGEV) are enriched in acidic residues. Residues 52-117 (SRNEKKARKS…AKIEDLNSQA (66 aa)) form the NAC-A/B domain. Residues 119 to 128 (ASAAAQLAAQ) show a composition bias toward low complexity. Over residues 129 to 159 (ESHDHAGHDHSGHDHSHDHGKGKAVDTGDEK) the composition is skewed to basic and acidic residues. The span at 160–171 (KEEEEDDTEEVD) shows a compositional bias: acidic residues. A UBA domain is found at 175 to 214 (LEDKDIELVMTQASVSRNKAVKALKENDNDIVNSIMALSI).

It belongs to the NAC-alpha family. As to quaternary structure, part of the nascent polypeptide-associated complex (NAC), consisting of EGD2 and EGD1. NAC associates with ribosomes via EGD1.

It is found in the cytoplasm. The protein resides in the nucleus. Functionally, component of the nascent polypeptide-associated complex (NAC), a dynamic component of the ribosomal exit tunnel, protecting the emerging polypeptides from interaction with other cytoplasmic proteins to ensure appropriate nascent protein targeting. The NAC complex also promotes mitochondrial protein import by enhancing productive ribosome interactions with the outer mitochondrial membrane and blocks the inappropriate interaction of ribosomes translating non-secretory nascent polypeptides with translocation sites in the membrane of the endoplasmic reticulum. EGD2 may also be involved in transcription regulation. This Sclerotinia sclerotiorum (strain ATCC 18683 / 1980 / Ss-1) (White mold) protein is Nascent polypeptide-associated complex subunit alpha (egd2).